A 511-amino-acid polypeptide reads, in one-letter code: Lysine--tRNA ligase (511 aa).

Residues Glu421 and Glu428 each coordinate Mg(2+).

This sequence belongs to the class-II aminoacyl-tRNA synthetase family. As to quaternary structure, homodimer. Mg(2+) serves as cofactor.

The protein resides in the cytoplasm. It carries out the reaction tRNA(Lys) + L-lysine + ATP = L-lysyl-tRNA(Lys) + AMP + diphosphate. The sequence is that of Lysine--tRNA ligase from Janthinobacterium sp. (strain Marseille) (Minibacterium massiliensis).